Here is a 268-residue protein sequence, read N- to C-terminus: Ribosomal RNA small subunit methyltransferase A (268 aa).

The S-adenosyl-L-methionine site is built by Asn16, Leu18, Gly43, Glu64, Asp89, and Asn110.

The protein belongs to the class I-like SAM-binding methyltransferase superfamily. rRNA adenine N(6)-methyltransferase family. RsmA subfamily.

Its subcellular location is the cytoplasm. The catalysed reaction is adenosine(1518)/adenosine(1519) in 16S rRNA + 4 S-adenosyl-L-methionine = N(6)-dimethyladenosine(1518)/N(6)-dimethyladenosine(1519) in 16S rRNA + 4 S-adenosyl-L-homocysteine + 4 H(+). Specifically dimethylates two adjacent adenosines (A1518 and A1519) in the loop of a conserved hairpin near the 3'-end of 16S rRNA in the 30S particle. May play a critical role in biogenesis of 30S subunits. The polypeptide is Ribosomal RNA small subunit methyltransferase A (Pseudomonas syringae pv. syringae (strain B728a)).